The following is an 87-amino-acid chain: uncharacterized protein (87 aa).

A helical membrane pass occupies residues 21–41 (LSSSLYSVAFFLFFFPNFLFF).

It localises to the membrane. This is an uncharacterized protein from Saccharomyces cerevisiae (strain ATCC 204508 / S288c) (Baker's yeast).